Consider the following 567-residue polypeptide: Hydroxylamine reductase 2 (567 aa).

[4Fe-4S] cluster-binding residues include C5, C8, C17, and C23. 8 residues coordinate hybrid [4Fe-2O-2S] cluster: H262, E286, C330, C421, C449, C474, E509, and K511. C421 bears the Cysteine persulfide mark.

Belongs to the HCP family. It depends on [4Fe-4S] cluster as a cofactor. The cofactor is hybrid [4Fe-2O-2S] cluster.

The protein resides in the cytoplasm. It carries out the reaction A + NH4(+) + H2O = hydroxylamine + AH2 + H(+). Catalyzes the reduction of hydroxylamine to form NH(3) and H(2)O. This chain is Hydroxylamine reductase 2, found in Clostridium acetobutylicum (strain ATCC 824 / DSM 792 / JCM 1419 / IAM 19013 / LMG 5710 / NBRC 13948 / NRRL B-527 / VKM B-1787 / 2291 / W).